Here is an 878-residue protein sequence, read N- to C-terminus: MIFGTPNSTFLENRLGSSTGMPFSSATSLNSGVDQMMNELNIQQPTSHTVLFDLSWEVAKKVGGIYTVLKTKAPVTVEEYKSRYALIGPYNASTAPTEFEPLIPGPLSSPIIENMMKKYGIHVHFGKWLVEGYPKVFLIDLHSSMHKLGEWRWDLMSGFEQAGDNETNETIVFGYQSALLLKEFAEANPNDKYIAHFHEWQASVGLILLKKWKVPVSTIFTTHATLLGRYLAAGGVDLYNQMQVLNMDFEASKRGIYHRHWIEKKSAADSHVFTTVSEITGYESEHILMRKPDVILPNGLKLDKFTALHEFQNLHAKYKGVLNEFVRGHFYGHYSDFDLDNTLYVFTAGRHEYFNKGVDMFLDSLAGLNKLLQQSGSKMTVVAFIIMPAATNNFNVESLKGHSYLKDMRRTCNTIVEAMGERLFEATSRGKMISPEELLSQEDLVMLKRRIFALKQKSSGPPVVTHNMINDNDEILQHIRRIKLFNSQEDRVKVIYHPEFLTSTNPLIPLDYTEFVRGCHLGIFPSYYEPFGMTPAECCASGCPSITSNLTGFANYMSRALQDTDSKGIFIVDRRFKSSRETVDQMTQYLWKFTQLDRRQRIELRNATEKLSELLDWRTLGKFYKTARALALERAFPPKPISRSPSPSPSSSLKLSTGLSNQIELQQQQQQQQPQPIGTTINLIPPSSNVSVTPTTTPTTTTTATTATTAPITTPKPNVIPINTGKENITLLSPNSMSSLLSDSLNEFKKQQQQQQQSKTPTTPTTTSTTTTTPSTTAAATNKSVLSNPTPTPSPNTSSFIPTNKGSTATTTTTTATPTPTPSNNTNGKPFNPIEALTKSNSSSNFATTSTASVNTNNGGTNSPVSKSIPIPSSKSLK.

A UDP-alpha-D-glucose-binding site is contributed by Lys-61. Disordered stretches follow at residues 637–721 (PPKP…NVIP) and 746–878 (NEFK…KSLK). Composition is skewed to low complexity over residues 641 to 656 (ISRS…LKLS) and 666 to 676 (QQQQQQQQPQP). Over residues 677-692 (IGTTINLIPPSSNVSV) the composition is skewed to polar residues. Composition is skewed to low complexity over residues 693–715 (TPTT…ITTP), 746–781 (NEFK…AAAT), 795–830 (PNTS…NGKP), and 838–878 (TKSN…KSLK).

Belongs to the glycosyltransferase 3 family.

The catalysed reaction is [(1-&gt;4)-alpha-D-glucosyl](n) + UDP-alpha-D-glucose = [(1-&gt;4)-alpha-D-glucosyl](n+1) + UDP + H(+). It functions in the pathway glycan biosynthesis; glycogen biosynthesis. Functionally, catalyzes the formation of apha-1,4 glycosidic bonds adding glucose residue from UDPG to the growing chain of glycogen. This is Glycogen [starch] synthase (glcS) from Dictyostelium discoideum (Social amoeba).